Reading from the N-terminus, the 940-residue chain is Serine/threonine-protein kinase PLK4 (940 aa).

One can recognise a Protein kinase domain in the interval 12 to 265; sequence FKVLTLLGKG…LSAVLDHPFM (254 aa). ATP contacts are provided by residues 18–26 and Lys-41; that span reads LGKGSFACV. The active-site Proton acceptor is Asp-136. Disordered stretches follow at residues 262–353 and 409–529; these read HPFM…DLSR and RLFP…DAFV. A compositionally biased stretch (low complexity) spans 273-305; it reads SKDSGSSNGGSIDSGIATISTASNATNNSSSSR. Composition is skewed to polar residues over residues 337–349, 440–465, and 494–519; these read FKSG…NSQD, NPAS…QPWF, and GTQT…QHNN. A Cryptic POLO box 1 (CPB1) domain is found at 563-676; the sequence is CLKKSFPPLC…TKFVQLVKSK (114 aa). The Cryptic POLO box 2 (CPB2) domain occupies 677–791; it reads TPKVTLYTKF…GRRPVNPVPP (115 aa). One can recognise a POLO box domain in the interval 857–935; sequence KVLKSIFVPN…LSSILGLLAN (79 aa).

This sequence belongs to the protein kinase superfamily. Ser/Thr protein kinase family. CDC5/Polo subfamily. In terms of assembly, homodimer. In terms of processing, ubiquitinated; leading to its degradation by the proteasome.

It localises to the cytoplasm. Its subcellular location is the cytoskeleton. The protein resides in the microtubule organizing center. It is found in the centrosome. The protein localises to the centriole. It carries out the reaction L-seryl-[protein] + ATP = O-phospho-L-seryl-[protein] + ADP + H(+). The catalysed reaction is L-threonyl-[protein] + ATP = O-phospho-L-threonyl-[protein] + ADP + H(+). Serine/threonine-protein kinase that plays a central role in centriole duplication. Able to trigger procentriole formation on the surface of the parental centriole cylinder, leading to the recruitment of centriole biogenesis proteins such as sass6, cpap, ccp110, cep135 and gamma-tubulin. When overexpressed, it is able to induce centrosome amplification through the simultaneous generation of multiple procentrioles adjoining each parental centriole during S phase. Its central role in centriole replication suggests a possible role in tumorigenesis, centrosome aberrations being frequently observed in tumors. Also involved in deuterosome-mediated centriole amplification in multiciliated that can generate more than 100 centrioles. This chain is Serine/threonine-protein kinase PLK4, found in Danio rerio (Zebrafish).